A 1081-amino-acid polypeptide reads, in one-letter code: FHF complex subunit HOOK-interacting protein 1A (1081 aa).

4 disordered regions span residues 474–496 (SEEQ…PPPA), 544–623 (PETF…DPPK), 658–770 (EKDT…ENEP), and 863–883 (EAGS…RHPV). A compositionally biased stretch (pro residues) spans 486 to 496 (PSSPSPPPPPA). Positions 553-564 (EESRENSGHPEA) are enriched in basic and acidic residues. The segment covering 567–576 (PQQSVRTSGQ) has biased composition (polar residues). Acidic residues predominate over residues 680 to 707 (EPLEDTSEQQEDTSEQLEDTSELQEDTA). 2 stretches are compositionally biased toward polar residues: residues 727–738 (EAQSLPTSNGPL) and 746–762 (ESQP…NTFS).

This sequence belongs to the FHIP family. May be a component of the FTS/Hook/FHIP complex (FHF complex), composed of AKTIP/FTS, FHIP1B, and one or more members of the Hook family of proteins HOOK1, HOOK2, and HOOK3. May interact directly with AKTIP/FTS.

Functionally, probable component of the FTS/Hook/FHIP complex (FHF complex). FHF complex promotes the distribution of AP-4 complex to the perinuclear area of the cell. In Mus musculus (Mouse), this protein is FHF complex subunit HOOK-interacting protein 1A.